Consider the following 459-residue polypeptide: Proton-coupled folate transporter (459 aa).

Methionine 1 carries the post-translational modification N-acetylmethionine. Residues 1–25 are Cytoplasmic-facing; the sequence is MEGRANSPGEPRAWPTRSVLCRGCV. A helical transmembrane segment spans residues 26–44; that stretch reads EPLVFLANFALVLQGPVTT. Residues 45–82 lie on the Extracellular side of the membrane; the sequence is QYLWHRFSADLGYNGTRHRDSCSNHSVDPIAQEVETLT. Asparagine 58 and asparagine 68 each carry an N-linked (GlcNAc...) asparagine glycan. Cysteines 66 and 298 form a disulfide. Residues 83–108 traverse the membrane as a helical segment; sequence SHWTLYMNVGGFLVGLFSSTLLGAWS. The Cytoplasmic portion of the chain corresponds to 109–112; that stretch reads DCVG. A helical membrane pass occupies residues 113 to 135; the sequence is RRPLLVLASLGLLLQTVLSIFVV. Residues 136-140 are Extracellular-facing; sequence QLHLH. A helical transmembrane segment spans residues 141-154; sequence IGYLVLGRILCALL. At 155-177 the chain is on the cytoplasmic side; sequence GDFSGLLAASFASVADVSSSRTR. H(+)-binding residues include aspartate 156 and glutamate 185. Residues 178–203 traverse the membrane as a helical segment; sequence TIRMALLEACIGVAGMLASFIGGFLL. The Extracellular segment spans residues 204-208; sequence QEQVY. Residues 209 to 227 traverse the membrane as a helical segment; sequence VNPFWLALAVLTVMTLYAA. Residues 228–266 are Cytoplasmic-facing; that stretch reads FCFGETVKERTPTRLFTLRHHRSVIQLYVTQAPEKSRKH. The helical transmembrane segment at 267–289 threads the bilayer; the sequence is LALYSLAIFVMITVHLGAQDILT. Histidine 281 contacts H(+). Over 290 to 302 the chain is Extracellular; sequence LYELSAPLCWDSR. A helical transmembrane segment spans residues 303–325; sequence LISYGSAAQQLPYLTSLLGLRLL. Residues 326–331 lie on the Cytoplasmic side of the membrane; sequence QYCLAD. The helical transmembrane segment at 332–351 threads the bilayer; sequence TWVAEIGLVFNILGMMVFAF. Topologically, residues 352-355 are extracellular; that stretch reads ATIT. Residues 356-376 form a helical membrane-spanning segment; the sequence is PLMFTGYGLLFLSLVVTPIIR. Residues 377–388 are Cytoplasmic-facing; the sequence is AKLSRLVRQSEQ. The chain crosses the membrane as a helical span at residues 389–414; the sequence is GALFSALACVNGLAMLMASGIFNSLY. Residues 415-422 are Extracellular-facing; that stretch reads PATLNLMK. The helical transmembrane segment at 423–441 threads the bilayer; it reads GFPFLLAAGLLFIPAILMG. The Cytoplasmic segment spans residues 442–459; the sequence is ILERDNHCPEFQEFSQSP. A Phosphoserine modification is found at serine 458.

Belongs to the major facilitator superfamily. SLC46A family. In terms of assembly, monomer. Expressed in retina and retinal pigment epithelium.

The protein resides in the cell membrane. Its subcellular location is the apical cell membrane. It is found in the basolateral cell membrane. It localises to the endosome membrane. The protein localises to the cytoplasm. It catalyses the reaction folate(in) + H(+)(in) = folate(out) + H(+)(out). It carries out the reaction (6S)-5-methyl-5,6,7,8-tetrahydrofolate(in) + H(+)(in) = (6S)-5-methyl-5,6,7,8-tetrahydrofolate(out) + H(+)(out). The enzyme catalyses methotrexate(in) + H(+)(in) = methotrexate(out) + H(+)(out). The catalysed reaction is pemetrexed(in) + H(+)(in) = pemetrexed(out) + H(+)(out). In terms of biological role, proton-coupled folate symporter that mediates folate absorption using an H(+) gradient as a driving force. Involved in the intestinal absorption of folates at the brush-border membrane of the proximal jejunum, and the transport from blood to cerebrospinal fluid across the choroid plexus. Functions at acidic pH via alternate outward- and inward-open conformation states. Protonation of residues in the outward open state primes the protein for transport. Binding of folate promotes breaking of salt bridge network and subsequent closure of the extracellular gate, leading to the inward-open state and release of protons and folate. Also able to transport antifolate drugs, such as methotrexate and pemetrexed. Involved in FOLR1-mediated endocytosis by serving as a route of export of folates from acidified endosomes. Also acts as a lower-affinity, pH-independent heme carrier protein and constitutes the main importer of heme in the intestine. Imports heme in the retina and retinal pigment epithelium, in neurons of the hippocampus, in hepatocytes and in the renal epithelial cells. Hence, participates in the trafficking of heme and increases intracellular iron content. In Bos taurus (Bovine), this protein is Proton-coupled folate transporter.